The sequence spans 412 residues: Peptidase T (412 aa).

His-78 is a binding site for Zn(2+). Asp-80 is a catalytic residue. Residue Asp-140 participates in Zn(2+) binding. Glu-174 serves as the catalytic Proton acceptor. Zn(2+) is bound by residues Glu-175, Asp-197, and His-379.

It belongs to the peptidase M20B family. The cofactor is Zn(2+).

The protein resides in the cytoplasm. It carries out the reaction Release of the N-terminal residue from a tripeptide.. Cleaves the N-terminal amino acid of tripeptides. In Staphylococcus epidermidis (strain ATCC 12228 / FDA PCI 1200), this protein is Peptidase T.